Here is a 399-residue protein sequence, read N- to C-terminus: La protein 2 (399 aa).

The HTH La-type RNA-binding domain maps to 3–106; it reads SSFNEETAKK…GRGTKLSKPE (104 aa). The 78-residue stretch at 115-192 folds into the RRM domain; it reads RTLAASPFEY…ADLVLIPKSD (78 aa). In terms of domain architecture, xRRM spans 269 to 399; that stretch reads SLCKDNTDQL…QPTKKARKEP (131 aa). A disordered region spans residues 367-399; it reads AELEGGKEGHKKEKGKDECFENVQPTKKARKEP. Residues 370-385 are compositionally biased toward basic and acidic residues; it reads EGGKEGHKKEKGKDEC.

Expressed ubiquitously (at protein level).

It localises to the nucleus. It is found in the nucleoplasm. The protein resides in the nucleolus. Binds to the 3' poly(U) terminus of nascent RNA polymerase III transcripts, protecting them from exonuclease digestion and facilitating their folding and maturation. This Arabidopsis thaliana (Mouse-ear cress) protein is La protein 2 (LA2).